A 507-amino-acid chain; its full sequence is Cytochrome P450 monooxygenase cloA (507 aa).

A helical membrane pass occupies residues 15–35 (WTWILLTTCIALISPLVLKGI). Asparagine 247 carries N-linked (GlcNAc...) asparagine glycosylation. Residue cysteine 450 coordinates heme.

This sequence belongs to the cytochrome P450 family. Heme serves as cofactor.

It is found in the membrane. It functions in the pathway alkaloid biosynthesis; ergot alkaloid biosynthesis. In terms of biological role, cytochrome P450 monooxygenase; part of the gene cluster that mediates the biosynthesis of fungal ergot alkaloid. DmaW catalyzes the first step of ergot alkaloid biosynthesis by condensing dimethylallyl diphosphate (DMAP) and tryptophan to form 4-dimethylallyl-L-tryptophan. The second step is catalyzed by the methyltransferase easF that methylates 4-dimethylallyl-L-tryptophan in the presence of S-adenosyl-L-methionine, resulting in the formation of 4-dimethylallyl-L-abrine. The catalase easC and the FAD-dependent oxidoreductase easE then transform 4-dimethylallyl-L-abrine to chanoclavine-I which is further oxidized by easD in the presence of NAD(+), resulting in the formation of chanoclavine-I aldehyde. Agroclavine dehydrogenase easG then mediates the conversion of chanoclavine-I aldehyde to agroclavine via a non-enzymatic adduct reaction: the substrate is an iminium intermediate that is formed spontaneously from chanoclavine-I aldehyde in the presence of glutathione. The presence of easA is not required to complete this reaction. Further conversion of agroclavine to paspalic acid is a two-step process involving oxidation of agroclavine to elymoclavine and of elymoclavine to paspalic acid, the second step being performed by the elymoclavine oxidase cloA. Paspalic acid is then further converted to D-lysergic acid. Ergopeptines are assembled from D-lysergic acid and three different amino acids by the D-lysergyl-peptide-synthetases composed each of a monomudular and a trimodular nonribosomal peptide synthetase subunit. LpsB and lpsC encode the monomodular subunits responsible for D-lysergic acid activation and incorporation into the ergopeptine backbone. LpsA1 and A2 subunits encode the trimodular nonribosomal peptide synthetase assembling the tripeptide portion of ergopeptines. LpsA1 is responsible for formation of the major ergopeptine, ergotamine, and lpsA2 for alpha-ergocryptine, the minor ergopeptine of the total alkaloid mixture elaborated by C.purpurea. D-lysergyl-tripeptides are assembled by the nonribosomal peptide synthetases and released as N-(D-lysergyl-aminoacyl)-lactams. Cyclolization of the D-lysergyl-tripeptides is performed by the Fe(2+)/2-ketoglutarate-dependent dioxygenase easH which introduces a hydroxyl group into N-(D-lysergyl-aminoacyl)-lactam at alpha-C of the aminoacyl residue followed by spontaneous condensation with the terminal lactam carbonyl group. The chain is Cytochrome P450 monooxygenase cloA from Claviceps purpurea (strain 20.1) (Ergot fungus).